Consider the following 201-residue polypeptide: Probable GTP-binding protein EngB (201 aa).

The EngB-type G domain maps to 23–196; sequence TGPEIALAGR…HEAVEEILSM (174 aa). Residues 31-38, 58-62, 76-79, 143-146, and 175-177 contribute to the GTP site; these read GRSNVGKS, GKTQM, DLPG, TKAD, and YSA. Mg(2+)-binding residues include serine 38 and threonine 60.

The protein belongs to the TRAFAC class TrmE-Era-EngA-EngB-Septin-like GTPase superfamily. EngB GTPase family. The cofactor is Mg(2+).

Its function is as follows. Necessary for normal cell division and for the maintenance of normal septation. The protein is Probable GTP-binding protein EngB of Desulfitobacterium hafniense (strain DSM 10664 / DCB-2).